Reading from the N-terminus, the 289-residue chain is ATP synthase gamma chain (289 aa).

This sequence belongs to the ATPase gamma chain family. As to quaternary structure, F-type ATPases have 2 components, CF(1) - the catalytic core - and CF(0) - the membrane proton channel. CF(1) has five subunits: alpha(3), beta(3), gamma(1), delta(1), epsilon(1). CF(0) has three main subunits: a, b and c.

Its subcellular location is the cell membrane. Produces ATP from ADP in the presence of a proton gradient across the membrane. The gamma chain is believed to be important in regulating ATPase activity and the flow of protons through the CF(0) complex. The sequence is that of ATP synthase gamma chain from Mycoplasmoides gallisepticum (strain R(low / passage 15 / clone 2)) (Mycoplasma gallisepticum).